The sequence spans 367 residues: Homoserine O-acetyltransferase (367 aa).

An AB hydrolase-1 domain is found at 44–350 (NAIMVTHAWT…AYGHDAFLLE (307 aa)). The active-site Nucleophile is the Ser-150. A substrate-binding site is contributed by Arg-217. Catalysis depends on residues Asp-311 and His-344. Asp-345 contributes to the substrate binding site.

It belongs to the AB hydrolase superfamily. MetX family. As to quaternary structure, homodimer.

Its subcellular location is the cytoplasm. The catalysed reaction is L-homoserine + acetyl-CoA = O-acetyl-L-homoserine + CoA. The protein operates within amino-acid biosynthesis; L-methionine biosynthesis via de novo pathway; O-acetyl-L-homoserine from L-homoserine: step 1/1. Functionally, transfers an acetyl group from acetyl-CoA to L-homoserine, forming acetyl-L-homoserine. This Geotalea daltonii (strain DSM 22248 / JCM 15807 / FRC-32) (Geobacter daltonii) protein is Homoserine O-acetyltransferase.